A 425-amino-acid polypeptide reads, in one-letter code: Putative TRAP transporter large permease protein HI_1029 (425 aa).

13 helical membrane passes run Val3–Ala23, Leu24–Ala44, Phe54–Leu74, Leu93–Ala113, Leu139–Phe159, Lys169–Trp189, Val217–Pro237, Gly241–Leu261, Thr275–Ala295, Pro312–Leu332, Pro334–Pro354, Val355–Gly375, and Tyr399–Met419.

The protein belongs to the TRAP transporter large permease family.

The protein resides in the cell inner membrane. The sequence is that of Putative TRAP transporter large permease protein HI_1029 from Haemophilus influenzae (strain ATCC 51907 / DSM 11121 / KW20 / Rd).